Reading from the N-terminus, the 293-residue chain is Elongation factor Ts (293 aa).

Positions 80–83 (TDFV) are involved in Mg(2+) ion dislocation from EF-Tu.

Belongs to the EF-Ts family.

Its subcellular location is the cytoplasm. Associates with the EF-Tu.GDP complex and induces the exchange of GDP to GTP. It remains bound to the aminoacyl-tRNA.EF-Tu.GTP complex up to the GTP hydrolysis stage on the ribosome. The chain is Elongation factor Ts from Staphylococcus aureus (strain Mu3 / ATCC 700698).